The sequence spans 140 residues: ATP synthase epsilon chain (140 aa).

Belongs to the ATPase epsilon chain family. In terms of assembly, F-type ATPases have 2 components, CF(1) - the catalytic core - and CF(0) - the membrane proton channel. CF(1) has five subunits: alpha(3), beta(3), gamma(1), delta(1), epsilon(1). CF(0) has three main subunits: a, b and c.

It is found in the cell inner membrane. Produces ATP from ADP in the presence of a proton gradient across the membrane. The chain is ATP synthase epsilon chain from Janthinobacterium sp. (strain Marseille) (Minibacterium massiliensis).